The sequence spans 546 residues: Chaperonin GroEL 1 (546 aa).

Residues 30 to 33, Lys-51, 87 to 91, Gly-415, 479 to 481, and Asp-495 each bind ATP; these read TLGP, DGTTT, and NAA. The interval 526–546 is disordered; it reads KEDAPMPGGMPGGMGGMGMDM. The span at 534-546 shows a compositional bias: gly residues; it reads GMPGGMGGMGMDM.

It belongs to the chaperonin (HSP60) family. In terms of assembly, forms a cylinder of 14 subunits composed of two heptameric rings stacked back-to-back. Interacts with the co-chaperonin GroES.

It localises to the cytoplasm. It carries out the reaction ATP + H2O + a folded polypeptide = ADP + phosphate + an unfolded polypeptide.. Together with its co-chaperonin GroES, plays an essential role in assisting protein folding. The GroEL-GroES system forms a nano-cage that allows encapsulation of the non-native substrate proteins and provides a physical environment optimized to promote and accelerate protein folding. The sequence is that of Chaperonin GroEL 1 from Burkholderia vietnamiensis (strain G4 / LMG 22486) (Burkholderia cepacia (strain R1808)).